A 516-amino-acid polypeptide reads, in one-letter code: Oxysterol-binding protein-like protein 1 (516 aa).

2 disordered regions span residues 168–240 (PLGK…SQKS) and 459–501 (KQEI…EEGK). Polar residues predominate over residues 178 to 187 (SRTTSSQSVA). A Phosphoserine modification is found at Ser182. The segment covering 197-206 (TSKKKSSKKN) has biased composition (basic residues). Positions 218–238 (DRSSTAPSTAESNNEHLSSSQ) are enriched in polar residues.

The protein belongs to the OSBP family.

The protein localises to the endoplasmic reticulum. This Schizosaccharomyces pombe (strain 972 / ATCC 24843) (Fission yeast) protein is Oxysterol-binding protein-like protein 1 (obp1).